The chain runs to 843 residues: Protein PLASTID MOVEMENT IMPAIRED 1 (843 aa).

A compositionally biased stretch (polar residues) spans proline 30 to glutamate 58. Disordered regions lie at residues proline 30–glutamate 65 and leucine 88–lysine 116. Positions leucine 131–isoleucine 284 constitute a C2 NT-type domain. Disordered stretches follow at residues phenylalanine 300–glycine 412 and methionine 450–glutamine 472. Residues lysine 307–glutamate 336 are compositionally biased toward polar residues. Residues serine 314 and serine 328 each carry the phosphoserine modification. Positions proline 365–glutamate 381 are enriched in basic and acidic residues. Phosphothreonine is present on threonine 404. Serine 407 bears the Phosphoserine mark. The residue at position 410 (threonine 410) is a Phosphothreonine. Residues aspartate 456–glutamine 472 show a composition bias toward acidic residues. Serine 507 carries the post-translational modification Phosphoserine.

As to expression, expressed in leaves, stems, cauline leaves, and flowers but not in roots. Present in leaves in both mesophyll and pavement cells.

It localises to the cytoplasm. Necessary for chloroplast and nuclear photorelocation movements via the regulation of chloroplast-actin (cp-actin) filaments in mesophyll cells, and together with PMIR1, in pavement cells. Required component for both the low- and high-light-dependent chloroplast movement responses via an abscisic acid (ABA) pathway. Involved in the ABA response pathway during seed germination. Modulates ABA accumulation during periods of water deficit at the seedling stage. The protein is Protein PLASTID MOVEMENT IMPAIRED 1 of Arabidopsis thaliana (Mouse-ear cress).